We begin with the raw amino-acid sequence, 167 residues long: 3-isopropylmalate dehydratase small subunit (167 aa).

It belongs to the LeuD family. LeuD type 2 subfamily. In terms of assembly, heterodimer of LeuC and LeuD.

It carries out the reaction (2R,3S)-3-isopropylmalate = (2S)-2-isopropylmalate. It functions in the pathway amino-acid biosynthesis; L-leucine biosynthesis; L-leucine from 3-methyl-2-oxobutanoate: step 2/4. In terms of biological role, catalyzes the isomerization between 2-isopropylmalate and 3-isopropylmalate, via the formation of 2-isopropylmaleate. In Oleidesulfovibrio alaskensis (strain ATCC BAA-1058 / DSM 17464 / G20) (Desulfovibrio alaskensis), this protein is 3-isopropylmalate dehydratase small subunit.